A 224-amino-acid polypeptide reads, in one-letter code: SPI-2 type 3 secretion system stator protein (224 aa).

This sequence belongs to the SctL stator family. The core secretion machinery of the T3SS is composed of approximately 20 different proteins, including cytoplasmic components, a base, an export apparatus and a needle. This subunit is part of the cytosolic complex. Interacts directly with SsaN/SctN2 (T3SS-2 ATPase).

The protein localises to the cytoplasm. Component of the type III secretion system (T3SS), also called injectisome, which is used to inject bacterial effector proteins into eukaryotic host cells. Acts as a regulator of the SsaN/SctN2 ATPase activity. The protein is SPI-2 type 3 secretion system stator protein of Salmonella typhimurium (strain LT2 / SGSC1412 / ATCC 700720).